Reading from the N-terminus, the 147-residue chain is Myoglobin (147 aa).

One can recognise a Globin domain in the interval 2 to 141 (ADFDAVLKFW…FIADMDANYK (140 aa)). A nitrite-binding site is contributed by H60. H60 is an O2 binding site. Position 89 (H89) interacts with heme b.

The protein belongs to the globin family. In terms of assembly, monomeric.

It localises to the cytoplasm. It is found in the sarcoplasm. It catalyses the reaction Fe(III)-heme b-[protein] + nitric oxide + H2O = Fe(II)-heme b-[protein] + nitrite + 2 H(+). It carries out the reaction H2O2 + AH2 = A + 2 H2O. Monomeric heme protein which primary function is to store oxygen and facilitate its diffusion within muscle tissues. Reversibly binds oxygen through a pentacoordinated heme iron and enables its timely and efficient release as needed during periods of heightened demand. Depending on the oxidative conditions of tissues and cells, and in addition to its ability to bind oxygen, it also has a nitrite reductase activity whereby it regulates the production of bioactive nitric oxide. Under stress conditions, like hypoxia and anoxia, it also protects cells against reactive oxygen species thanks to its pseudoperoxidase activity. The chain is Myoglobin (mb) from Scomber japonicus (Chub mackerel).